Consider the following 152-residue polypeptide: Histone deacetylase complex subunit SAP18 (152 aa).

The segment at methionine 1–threonine 38 is disordered. The segment covering proline 28–threonine 38 has biased composition (basic and acidic residues).

The protein belongs to the SAP18 family. In terms of assembly, interacts with SIN3, ERF3, ERF4 and HDA19. As to expression, ubiquitous, with low level in flowers.

In terms of biological role, links the histone deacetylase complex to transcriptional repressors bound to chromatin. Involved in the tethering of the SIN3 complex to core histone proteins. In Arabidopsis thaliana (Mouse-ear cress), this protein is Histone deacetylase complex subunit SAP18.